A 189-amino-acid chain; its full sequence is Large ribosomal subunit protein bL9 (189 aa).

It belongs to the bacterial ribosomal protein bL9 family.

Its function is as follows. Binds to the 23S rRNA. This chain is Large ribosomal subunit protein bL9, found in Brucella anthropi (strain ATCC 49188 / DSM 6882 / CCUG 24695 / JCM 21032 / LMG 3331 / NBRC 15819 / NCTC 12168 / Alc 37) (Ochrobactrum anthropi).